The primary structure comprises 133 residues: MRRHKSKSIPGRNLRLADQIQKDLAGIIQREIDMTRAGLITLSGVELSADYAHAKVYFTVLGAEPDTAAALLNEKAGWLHSQLYKLLHIHTVPTLRFVHDLQITRGIEMSVLIDRANRPGPHSGVPDEPEDQS.

The protein belongs to the RbfA family. In terms of assembly, monomer. Binds 30S ribosomal subunits, but not 50S ribosomal subunits or 70S ribosomes.

The protein localises to the cytoplasm. Functionally, one of several proteins that assist in the late maturation steps of the functional core of the 30S ribosomal subunit. Associates with free 30S ribosomal subunits (but not with 30S subunits that are part of 70S ribosomes or polysomes). Required for efficient processing of 16S rRNA. May interact with the 5'-terminal helix region of 16S rRNA. This Bordetella parapertussis (strain 12822 / ATCC BAA-587 / NCTC 13253) protein is Ribosome-binding factor A.